The chain runs to 456 residues: Exodeoxyribonuclease 7 large subunit (456 aa).

Belongs to the XseA family. In terms of assembly, heterooligomer composed of large and small subunits.

It is found in the cytoplasm. It carries out the reaction Exonucleolytic cleavage in either 5'- to 3'- or 3'- to 5'-direction to yield nucleoside 5'-phosphates.. Functionally, bidirectionally degrades single-stranded DNA into large acid-insoluble oligonucleotides, which are then degraded further into small acid-soluble oligonucleotides. This chain is Exodeoxyribonuclease 7 large subunit, found in Shigella flexneri serotype 5b (strain 8401).